The following is a 339-amino-acid chain: Uracil nucleotide/cysteinyl leukotriene receptor (339 aa).

The Extracellular segment spans residues 1–36 (MDGLETALPSLTDNASLAYSEQCGQETPLENMLFAC). An N-linked (GlcNAc...) asparagine glycan is attached at asparagine 14. A helical transmembrane segment spans residues 37 to 57 (FYLLDFILAFVGNALALWLFI). Over 58 to 64 (WDHKSGT) the chain is Cytoplasmic. The chain crosses the membrane as a helical span at residues 65-85 (PANVFLMHLAVADLSCVLVLP). At 86-105 (TRLVYHFSGNHWPFGEIPCR) the chain is on the extracellular side. Cysteine 104 and cysteine 181 are oxidised to a cystine. A helical membrane pass occupies residues 106 to 126 (LTGFLFYLNMYASIYFLTCIS). The Cytoplasmic portion of the chain corresponds to 127–147 (ADRFLAIVHPVKSLKLRRPLY). A helical membrane pass occupies residues 148–168 (AHLACAFLWIVVAVAMAPLLV). The Extracellular segment spans residues 169 to 195 (SPQTVQTNHTVVCLQLYREKASHHALA). N-linked (GlcNAc...) asparagine glycosylation occurs at asparagine 176. Residues 196–216 (SLAVAFTFPFITTVTCYLLII) form a helical membrane-spanning segment. Residues 217-232 (RSLRQGPRIEKHLKNK) are Cytoplasmic-facing. A helical membrane pass occupies residues 233-253 (AVRMIAMVLAIFLICFVPYHI). Residues 254-280 (HRSVYVLHYRGGGTSCSAQRALALGNR) are Extracellular-facing. A helical transmembrane segment spans residues 281 to 301 (ITSCLTSLNGALDPVMYFFVA). The Cytoplasmic segment spans residues 302-339 (EKFRHALCNLLCSKRLTGPPPSFEGKTNESSLSARSEL).

Belongs to the G-protein coupled receptor 1 family. Expressed in brain, kidney, and heart. Highest level in brain.

It localises to the cell membrane. Its function is as follows. Dual specificity receptor for uracil nucleotides and cysteinyl leukotrienes (CysLTs). Signals through G(i) and inhibition of adenylyl cyclase. May mediate brain damage by nucleotides and CysLTs following ischemia. The protein is Uracil nucleotide/cysteinyl leukotriene receptor of Rattus norvegicus (Rat).